The following is a 336-amino-acid chain: Inositol 2-dehydrogenase (336 aa).

Belongs to the Gfo/Idh/MocA family. Homotetramer.

The catalysed reaction is myo-inositol + NAD(+) = scyllo-inosose + NADH + H(+). Functionally, involved in the oxidation of myo-inositol (MI) to 2-keto-myo-inositol (2KMI or 2-inosose). This is Inositol 2-dehydrogenase from Pseudomonas fluorescens (strain SBW25).